The primary structure comprises 366 residues: Anhydro-N-acetylmuramic acid kinase (366 aa).

10 to 17 lines the ATP pocket; the sequence is GTSMDGID.

The protein belongs to the anhydro-N-acetylmuramic acid kinase family.

It catalyses the reaction 1,6-anhydro-N-acetyl-beta-muramate + ATP + H2O = N-acetyl-D-muramate 6-phosphate + ADP + H(+). It functions in the pathway amino-sugar metabolism; 1,6-anhydro-N-acetylmuramate degradation. It participates in cell wall biogenesis; peptidoglycan recycling. Catalyzes the specific phosphorylation of 1,6-anhydro-N-acetylmuramic acid (anhMurNAc) with the simultaneous cleavage of the 1,6-anhydro ring, generating MurNAc-6-P. Is required for the utilization of anhMurNAc either imported from the medium or derived from its own cell wall murein, and thus plays a role in cell wall recycling. The polypeptide is Anhydro-N-acetylmuramic acid kinase (Legionella pneumophila subsp. pneumophila (strain Philadelphia 1 / ATCC 33152 / DSM 7513)).